Consider the following 174-residue polypeptide: MTYTLLLLSVILVVGFVGFSSKPSPIYGGLVLVVSGVVGCAVILNCGGGYLGLMVFLIYLGGMMVVFGYTTAMAIEEYPEAWGSGVEVLVGVLVGFVMEVALVLWAKEYDGLVMVLNFDNMGSWVIYEGEGSGLIREDSIGAGALYDYGRWLVVVTGWTLLVGVYIVIEIARGN.

The next 5 membrane-spanning stretches (helical) occupy residues 1-21 (MTYTLLLLSVILVVGFVGFSS), 24-44 (SPIYGGLVLVVSGVVGCAVIL), 47-67 (GGGYLGLMVFLIYLGGMMVVF), 86-106 (VEVLVGVLVGFVMEVALVLWA), and 151-171 (WLVVVTGWTLLVGVYIVIEIA).

The protein belongs to the complex I subunit 6 family. In terms of assembly, core subunit of respiratory chain NADH dehydrogenase (Complex I) which is composed of 45 different subunits.

It is found in the mitochondrion inner membrane. It catalyses the reaction a ubiquinone + NADH + 5 H(+)(in) = a ubiquinol + NAD(+) + 4 H(+)(out). Core subunit of the mitochondrial membrane respiratory chain NADH dehydrogenase (Complex I) which catalyzes electron transfer from NADH through the respiratory chain, using ubiquinone as an electron acceptor. Essential for the catalytic activity and assembly of complex I. The chain is NADH-ubiquinone oxidoreductase chain 6 (MT-ND6) from Hylobates lar (Lar gibbon).